A 25-amino-acid chain; its full sequence is Snaclec bothroalternin subunit alpha/beta (25 aa).

The region spanning 1–25 (DCPSDWSNHEGHCYRVFNEWMNWAD) is the C-type lectin domain. Cys2 and Cys13 are oxidised to a cystine.

This sequence belongs to the snaclec family. In terms of assembly, heterodimer of subunits alpha and beta; disulfide-linked. As to expression, expressed by the venom gland.

The protein localises to the secreted. Its function is as follows. Thrombin (F2) inhibitor that inhibits aggregation of rabbit platelets induced by alpha-thrombin. The polypeptide is Snaclec bothroalternin subunit alpha/beta (Bothrops alternatus (Urutu)).